We begin with the raw amino-acid sequence, 95 residues long: Aspartyl/glutamyl-tRNA(Asn/Gln) amidotransferase subunit C (95 aa).

This sequence belongs to the GatC family. Heterotrimer of A, B and C subunits.

It catalyses the reaction L-glutamyl-tRNA(Gln) + L-glutamine + ATP + H2O = L-glutaminyl-tRNA(Gln) + L-glutamate + ADP + phosphate + H(+). The catalysed reaction is L-aspartyl-tRNA(Asn) + L-glutamine + ATP + H2O = L-asparaginyl-tRNA(Asn) + L-glutamate + ADP + phosphate + 2 H(+). Allows the formation of correctly charged Asn-tRNA(Asn) or Gln-tRNA(Gln) through the transamidation of misacylated Asp-tRNA(Asn) or Glu-tRNA(Gln) in organisms which lack either or both of asparaginyl-tRNA or glutaminyl-tRNA synthetases. The reaction takes place in the presence of glutamine and ATP through an activated phospho-Asp-tRNA(Asn) or phospho-Glu-tRNA(Gln). The polypeptide is Aspartyl/glutamyl-tRNA(Asn/Gln) amidotransferase subunit C (Chlorobium limicola (strain DSM 245 / NBRC 103803 / 6330)).